The sequence spans 357 residues: 3-isopropylmalate dehydrogenase (357 aa).

76–89 (GPQWDTIDPALRPE) serves as a coordination point for NAD(+). Substrate is bound by residues Arg96, Arg106, Arg134, and Asp224. Mg(2+)-binding residues include Asp224, Asp248, and Asp252. 282–294 (GSAPDIAGQGIAN) is a binding site for NAD(+).

Belongs to the isocitrate and isopropylmalate dehydrogenases family. LeuB type 1 subfamily. As to quaternary structure, homodimer. The cofactor is Mg(2+). Mn(2+) is required as a cofactor.

Its subcellular location is the cytoplasm. The catalysed reaction is (2R,3S)-3-isopropylmalate + NAD(+) = 4-methyl-2-oxopentanoate + CO2 + NADH. It functions in the pathway amino-acid biosynthesis; L-leucine biosynthesis; L-leucine from 3-methyl-2-oxobutanoate: step 3/4. Catalyzes the oxidation of 3-carboxy-2-hydroxy-4-methylpentanoate (3-isopropylmalate) to 3-carboxy-4-methyl-2-oxopentanoate. The product decarboxylates to 4-methyl-2 oxopentanoate. The polypeptide is 3-isopropylmalate dehydrogenase (Xanthomonas campestris pv. campestris (strain 8004)).